Here is a 317-residue protein sequence, read N- to C-terminus: Melanocyte-stimulating hormone receptor (317 aa).

The Extracellular segment spans residues 1 to 37 (MAVQGSQRRLLGSLNSTPTAIPQLGLAANQTGAWCLE). Asparagine 29 is a glycosylation site (N-linked (GlcNAc...) asparagine). Residues 38–63 (VSIPDGLFLSLGLVSLVENVLVVATI) traverse the membrane as a helical segment. Over 64 to 72 (AKNRNLHSP) the chain is Cytoplasmic. A helical membrane pass occupies residues 73–93 (MYCFICCLALSDLLVSGGNVL). The Extracellular portion of the chain corresponds to 94–118 (ETAVILLLEAGALAARAAVVQQLDN). The chain crosses the membrane as a helical span at residues 119–140 (VIDVITCSSMLSSLCFLGAIAV). Residues 141–163 (DRYISIFYALRYHSIVTLPRARR) are Cytoplasmic-facing. The chain crosses the membrane as a helical span at residues 164–183 (AIAAIWVASVLFSTLFIAYY). Over 184–191 (DHAAVLLC) the chain is Extracellular. A helical membrane pass occupies residues 192–211 (LVVFFLAMLVLMAVLYVHML). Residues 212 to 240 (ARACQHAQGIARLHKRQRPVHQGFGLKGA) lie on the Cytoplasmic side of the membrane. A helical transmembrane segment spans residues 241-266 (VTLTILLGIFFLCWGPFFLHLTLIVL). The Extracellular segment spans residues 267–279 (CPQHPTCSCIFKN). The chain crosses the membrane as a helical span at residues 280-300 (FNLFLALIICNAIIDPLIYAF). Topologically, residues 301-317 (RSQELRRTLKEVLTCSW) are cytoplasmic. Residue cysteine 315 is the site of S-palmitoyl cysteine attachment.

This sequence belongs to the G-protein coupled receptor 1 family. In terms of assembly, interacts with MGRN1, but does not undergo MGRN1-mediated ubiquitination; this interaction competes with GNAS-binding and thus inhibits agonist-induced cAMP production. Interacts with OPN3; the interaction results in a decrease in MC1R-mediated cAMP signaling and ultimately a decrease in melanin production in melanocytes.

It localises to the cell membrane. Its function is as follows. Receptor for MSH (alpha, beta and gamma) and ACTH. The activity of this receptor is mediated by G proteins which activate adenylate cyclase. Mediates melanogenesis, the production of eumelanin (black/brown) and phaeomelanin (red/yellow), via regulation of cAMP signaling in melanocytes. The polypeptide is Melanocyte-stimulating hormone receptor (MC1R) (Pongo pygmaeus (Bornean orangutan)).